The primary structure comprises 274 residues: AA9 family lytic polysaccharide monooxygenase A (274 aa).

Positions 1 to 22 (MHVPQFISTGALLALLARPAAA) are cleaved as a signal peptide. A Cu(2+)-binding site is contributed by His23. A disulfide bond links Cys63 and Cys194. (1,4-beta-D-glucosyl)n contacts are provided by Gly67, Asp98, and Ser100. Residue His101 coordinates Cu(2+). O2 is bound at residue His174. Position 177 (Asp177) interacts with (1,4-beta-D-glucosyl)n. Position 191 (Tyr191) interacts with Cu(2+).

Belongs to the polysaccharide monooxygenase AA9 family. The cofactor is Cu(2+).

The protein resides in the secreted. It catalyses the reaction [(1-&gt;4)-beta-D-glucosyl]n+m + reduced acceptor + O2 = 4-dehydro-beta-D-glucosyl-[(1-&gt;4)-beta-D-glucosyl]n-1 + [(1-&gt;4)-beta-D-glucosyl]m + acceptor + H2O.. In terms of biological role, lytic polysaccharide monooxygenase (LPMO) that depolymerizes crystalline and amorphous polysaccharides via the oxidation of scissile alpha- or beta-(1-4)-glycosidic bonds, yielding C4 oxidation products. Catalysis by LPMOs requires the reduction of the active-site copper from Cu(II) to Cu(I) by a reducing agent and H(2)O(2) or O(2) as a cosubstrate. Cleaves a range of polysaccharides, including cellulose, xyloglucan, mixed-linkage glucan and glucomannan. This chain is AA9 family lytic polysaccharide monooxygenase A, found in Collariella virescens (Soil fungus).